The chain runs to 502 residues: Cytochrome P450 71A1 (502 aa).

The chain crosses the membrane as a helical span at residues leucine 7–leucine 21. Position 443 (cysteine 443) interacts with heme.

The protein belongs to the cytochrome P450 family. Requires heme as cofactor. Mesocarp.

It is found in the microsome membrane. Its subcellular location is the endoplasmic reticulum membrane. Involved in the metabolism of compounds associated with the development of flavor in the ripening fruit process, possibly by acting as trans-cinnamic acid 4-hydrolase. The protein is Cytochrome P450 71A1 (CYP71A1) of Persea americana (Avocado).